Reading from the N-terminus, the 276-residue chain is Secretagogin (276 aa).

EF-hand domains are found at residues 12–47, 58–93, 105–140, 149–184, 197–232, and 240–276; these read LDAA…MLMK, NLHK…EDEN, DSSV…LFLH, KLEE…QENF, ERKR…MMEL, and VDLD…KINP. Ca(2+) is bound by residues Asp-25, Asp-27, Tyr-31, Glu-36, Asp-71, Ser-73, Asp-75, Arg-77, Glu-82, Asp-118, Asp-120, Ser-122, Glu-129, Asp-162, Asn-164, Asp-166, Arg-168, Asp-173, Asp-210, Ser-212, Thr-214, Glu-221, Asp-254, Asn-256, Asp-258, Lys-260, and Glu-265.

Expressed at high levels in the pancreatic islets of Langerhans and to a much lesser extent in the gastrointestinal tract (stomach, small intestine and colon), the adrenal medulla and cortex and the thyroid C-cells. In the brain, the expression is restricted to distinct subtypes of neurons with highest expression in the molecular layer of the cerebellum (stellate and basket cells), in the anterior part of the pituitary gland, in the thalamus, in the hypothalamus and in a subgroup of neocortical neurons.

It is found in the cytoplasm. Its subcellular location is the secreted. The protein localises to the cytoplasmic vesicle. The protein resides in the secretory vesicle membrane. The protein is Secretagogin (SCGN) of Homo sapiens (Human).